The sequence spans 475 residues: Ribulose bisphosphate carboxylase large chain (475 aa).

Residues methionine 1 to valine 2 constitute a propeptide that is removed on maturation. The residue at position 3 (proline 3) is an N-acetylproline. Lysine 14 is subject to N6,N6,N6-trimethyllysine. Substrate contacts are provided by asparagine 123 and threonine 173. Lysine 175 functions as the Proton acceptor in the catalytic mechanism. Residue lysine 177 coordinates substrate. Mg(2+)-binding residues include lysine 201, aspartate 203, and glutamate 204. An N6-carboxylysine modification is found at lysine 201. Histidine 294 serves as the catalytic Proton acceptor. Arginine 295, histidine 327, and serine 379 together coordinate substrate.

It belongs to the RuBisCO large chain family. Type I subfamily. Heterohexadecamer of 8 large chains and 8 small chains. The cofactor is Mg(2+).

It is found in the plastid. It localises to the chloroplast. The catalysed reaction is 2 (2R)-3-phosphoglycerate + 2 H(+) = D-ribulose 1,5-bisphosphate + CO2 + H2O. It carries out the reaction D-ribulose 1,5-bisphosphate + O2 = 2-phosphoglycolate + (2R)-3-phosphoglycerate + 2 H(+). Its function is as follows. RuBisCO catalyzes two reactions: the carboxylation of D-ribulose 1,5-bisphosphate, the primary event in carbon dioxide fixation, as well as the oxidative fragmentation of the pentose substrate in the photorespiration process. Both reactions occur simultaneously and in competition at the same active site. The sequence is that of Ribulose bisphosphate carboxylase large chain from Stigeoclonium helveticum (Green alga).